Reading from the N-terminus, the 231-residue chain is Histone H1 (231 aa).

The span at 1-17 (MSDPAIEVAPVPVASPA) shows a compositional bias: low complexity. Disordered stretches follow at residues 1 to 44 (MSDP…PVSD) and 124 to 231 (TKKV…AKKA). The 75-residue stretch at 38–112 (THPPVSDMIV…GASGSFKLPA (75 aa)) folds into the H15 domain. Composition is skewed to basic residues over residues 145 to 171 (KVKK…KTTK), 178 to 213 (PTKK…KAKK), and 221 to 231 (KAAKKPSAKKA).

The protein belongs to the histone H1/H5 family.

It localises to the nucleus. The protein localises to the chromosome. Its function is as follows. Histones H1 are necessary for the condensation of nucleosome chains into higher-order structures. This chain is Histone H1, found in Chironomus thummi thummi (Midge).